The sequence spans 471 residues: RuvB-like protein 2 (471 aa).

Residue 75–82 (GPPSTGKT) participates in ATP binding.

Belongs to the RuvB family. As to quaternary structure, probably forms a homohexamer. Interacts with RVB1 and may form heterododecamers with RVB1. Component of the SWR1 chromatin remodeling complex composed of at least ACT1, ARP4, RVB1, RVB2, ARP6, YAF9, VPS71, VPS72, SWC3, SWC4, SWC5, SWC7 and SWR1, and perhaps BDF1. Component of the chromatin-remodeling INO80 complex, at least composed of ARP4, ARP5, ARP8, RVB1, RVB2, TAF14, NHP10, IES1, IES3, IES4, IES6, ACT1, IES2, IES5 and INO80. Also belongs to the R2TP complex composed of at least RVB1, RVB2, TAH1 and PIH1. Interacts with SPT15/TBP.

It is found in the nucleus. The protein resides in the nucleoplasm. It carries out the reaction ATP + H2O = ADP + phosphate + H(+). DNA helicase which participates in several chromatin remodeling complexes, including the SWR1 and the INO80 complexes. The SWR1 complex mediates the ATP-dependent exchange of histone H2A for the H2A variant HZT1 leading to transcriptional regulation of selected genes by chromatin remodeling. The INO80 complex remodels chromatin by shifting nucleosomes. Its ability to induce transcription of some phosphate-responsive genes is modulated by inositol polyphosphates. The INO80 complex is involved in DNA repair by associating to 'Ser-129' phosphorylated H2A histones as a response to DNA damage. During transcription may recruit SPT15/TBP to the TATA-boxes of involved genes. Required for box C/D and box H/ACA snoRNA accumulation and involved in pre-rRNA processing. This is RuvB-like protein 2 (RVB2) from Saccharomyces cerevisiae (strain ATCC 204508 / S288c) (Baker's yeast).